Reading from the N-terminus, the 91-residue chain is Small ribosomal subunit protein uS19 (91 aa).

Belongs to the universal ribosomal protein uS19 family.

Its function is as follows. Protein S19 forms a complex with S13 that binds strongly to the 16S ribosomal RNA. This chain is Small ribosomal subunit protein uS19, found in Paraburkholderia phymatum (strain DSM 17167 / CIP 108236 / LMG 21445 / STM815) (Burkholderia phymatum).